A 314-amino-acid chain; its full sequence is Leucine-rich repeat-containing protein 52 (314 aa).

The N-terminal stretch at 1-23 (MSLASGPSSKLLLFSLGMGLVSG) is a signal peptide. Positions 24–53 (SKCPNKCVCQDQEVACIDLHLTEYPADIPL) constitute an LRRNT domain. At 24–244 (SKCPNKCVCQ…MCITHLDQQD (221 aa)) the chain is on the extracellular side. Disulfide bonds link Cys26–Cys32 and Cys30–Cys39. 5 LRR repeats span residues 54 to 73 (NTRR…ALQL), 78 to 99 (DLVY…TFIG), 102 to 123 (RLIY…SFSV), 126 to 148 (NLVR…VFAN), and 151 to 172 (SLRY…GFHH). N-linked (GlcNAc...) asparagine glycans are attached at residues Asn112, Asn131, and Asn148. Positions 184–238 (NPWICNCSFLDFTIHLLVSHMDHPDAQNATCTEPAELKGWPITKVGNPLQYMCIT) constitute an LRRCT domain. Intrachain disulfides connect Cys188–Cys214 and Cys190–Cys236. N-linked (GlcNAc...) asparagine glycosylation is found at Asn189 and Asn211. The helical transmembrane segment at 245-265 (YIFLLLIGFCIFAAGTVAAWL) threads the bilayer. The Cytoplasmic portion of the chain corresponds to 266–314 (TGVCAVLYQNALRTSSGDDTEDETGSRFANQIFRSNTHLGPIRRFPELI).

As to quaternary structure, interacts with KCNMA1. Interacts with KCNU1; this interaction may be required for LRRC52 stability and changes the channel gating properties. In terms of processing, N-glycosylated. As to expression, testis-specific (at protein level). At the mRNA level, also detected in kidney, ventricle, spinal cord and skeletal muscle, although at lower levels compared to testis. Expression in testis at the protein level requires the presence of KCNU1.

The protein localises to the cell membrane. Auxiliary protein of the large-conductance, voltage and calcium-activated potassium channel (BK alpha). Modulates gating properties by producing a marked shift in the BK channel's voltage dependence of activation in the hyperpolarizing direction, and in the absence of calcium. KCNU1 channel auxiliary protein. Modulates KCNU1 gating properties, shifting KCNU1 gating to more negative potentials at a given pH. The polypeptide is Leucine-rich repeat-containing protein 52 (Lrrc52) (Mus musculus (Mouse)).